Consider the following 855-residue polypeptide: RE1-silencing transcription factor (855 aa).

The C2H2-type 1 zinc finger occupies phenylalanine 141–histidine 163. Residues asparagine 172 to asparagine 199 are disordered. Over residues proline 186–asparagine 199 the composition is skewed to polar residues. C2H2-type zinc fingers lie at residues isoleucine 204–histidine 226, phenylalanine 236–histidine 258, phenylalanine 264–histidine 286, phenylalanine 292–histidine 314, phenylalanine 320–histidine 343, leucine 349–histidine 371, and phenylalanine 377–histidine 400. Residues asparagine 458–serine 811 form a disordered region. 3 stretches are compositionally biased toward basic and acidic residues: residues glutamate 462 to aspartate 472, asparagine 481 to alanine 496, and alanine 504 to leucine 535. Over residues serine 548–threonine 569 the composition is skewed to polar residues. Basic and acidic residues predominate over residues glutamine 570–serine 580. The segment covering glutamine 594 to lysine 604 has biased composition (basic residues). The span at arginine 628–glutamine 638 shows a compositional bias: basic and acidic residues. Over residues arginine 639–aspartate 648 the composition is skewed to basic residues. Over residues proline 652–proline 662 the composition is skewed to polar residues. Composition is skewed to basic and acidic residues over residues proline 711–glutamate 721 and lysine 799–serine 811. The C2H2-type 9 zinc finger occupies histidine 818–histidine 840.

The protein resides in the nucleus. Its subcellular location is the cytoplasm. Functionally, transcriptional repressor which binds neuron-restrictive silencer element (NRSE) and represses neuronal gene transcription in non-neuronal cells. This is RE1-silencing transcription factor (rest) from Danio rerio (Zebrafish).